A 396-amino-acid chain; its full sequence is Elongation factor Tu (396 aa).

Positions 10–205 constitute a tr-type G domain; the sequence is KPHVNIGTIG…AVDESIPDPV (196 aa). Residues 19 to 26 form a G1 region; that stretch reads GHVDHGKT. A GTP-binding site is contributed by 19 to 26; the sequence is GHVDHGKT. Residue Thr-26 participates in Mg(2+) binding. The tract at residues 62-66 is G2; that stretch reads GITIN. The tract at residues 83 to 86 is G3; that stretch reads DAPG. GTP-binding positions include 83–87 and 138–141; these read DAPGH and NKAD. The interval 138 to 141 is G4; the sequence is NKAD. The interval 175–177 is G5; that stretch reads SAL.

It belongs to the TRAFAC class translation factor GTPase superfamily. Classic translation factor GTPase family. EF-Tu/EF-1A subfamily. In terms of assembly, monomer.

It is found in the cytoplasm. It catalyses the reaction GTP + H2O = GDP + phosphate + H(+). Functionally, GTP hydrolase that promotes the GTP-dependent binding of aminoacyl-tRNA to the A-site of ribosomes during protein biosynthesis. This is Elongation factor Tu from Mycolicibacterium gilvum (strain PYR-GCK) (Mycobacterium gilvum (strain PYR-GCK)).